The sequence spans 279 residues: NADPH-dependent 7-cyano-7-deazaguanine reductase (279 aa).

86–88 (IES) serves as a coordination point for substrate. 88 to 89 (SK) is an NADPH binding site. Cys186 functions as the Thioimide intermediate in the catalytic mechanism. The Proton donor role is filled by Asp193. Residue 225–226 (HE) participates in substrate binding. 254-255 (RG) provides a ligand contact to NADPH.

Belongs to the GTP cyclohydrolase I family. QueF type 2 subfamily. In terms of assembly, homodimer.

The protein resides in the cytoplasm. It carries out the reaction 7-aminomethyl-7-carbaguanine + 2 NADP(+) = 7-cyano-7-deazaguanine + 2 NADPH + 3 H(+). The protein operates within tRNA modification; tRNA-queuosine biosynthesis. Its function is as follows. Catalyzes the NADPH-dependent reduction of 7-cyano-7-deazaguanine (preQ0) to 7-aminomethyl-7-deazaguanine (preQ1). The chain is NADPH-dependent 7-cyano-7-deazaguanine reductase from Chromobacterium violaceum (strain ATCC 12472 / DSM 30191 / JCM 1249 / CCUG 213 / NBRC 12614 / NCIMB 9131 / NCTC 9757 / MK).